The primary structure comprises 396 residues: Tryptophan synthase beta chain (396 aa).

Position 86 is an N6-(pyridoxal phosphate)lysine (lysine 86).

This sequence belongs to the TrpB family. In terms of assembly, tetramer of two alpha and two beta chains. Pyridoxal 5'-phosphate is required as a cofactor.

The enzyme catalyses (1S,2R)-1-C-(indol-3-yl)glycerol 3-phosphate + L-serine = D-glyceraldehyde 3-phosphate + L-tryptophan + H2O. Its pathway is amino-acid biosynthesis; L-tryptophan biosynthesis; L-tryptophan from chorismate: step 5/5. Its function is as follows. The beta subunit is responsible for the synthesis of L-tryptophan from indole and L-serine. In Pectobacterium carotovorum subsp. carotovorum (strain PC1), this protein is Tryptophan synthase beta chain.